Here is a 159-residue protein sequence, read N- to C-terminus: Small ribosomal subunit protein uS17x (159 aa).

Belongs to the universal ribosomal protein uS17 family.

The protein resides in the cytoplasm. This chain is Small ribosomal subunit protein uS17x (RPS11C), found in Arabidopsis thaliana (Mouse-ear cress).